The chain runs to 813 residues: Leucine--tRNA ligase (813 aa).

Positions 42–52 match the 'HIGH' region motif; sequence PYTSGNLHIGH. The 'KMSKS' region signature appears at 580-584; that stretch reads KMSKS. Lys583 contributes to the ATP binding site.

This sequence belongs to the class-I aminoacyl-tRNA synthetase family.

The protein resides in the cytoplasm. It carries out the reaction tRNA(Leu) + L-leucine + ATP = L-leucyl-tRNA(Leu) + AMP + diphosphate. In Dehalococcoides mccartyi (strain CBDB1), this protein is Leucine--tRNA ligase.